Consider the following 743-residue polypeptide: Ectonucleotide pyrophosphatase/phosphodiesterase C27A7.3 (743 aa).

Over 1-23 (MSNRVVDVNSKKTGTSWKKKLMK) the chain is Cytoplasmic. A helical; Signal-anchor for type II membrane protein transmembrane segment spans residues 24–44 (IVIWSLAMLSFIAGLVLLGLV). The Lumenal segment spans residues 45 to 743 (AAATISGSKN…LRRNITTSLW (699 aa)). 2 residues coordinate Zn(2+): aspartate 87 and threonine 123. Threonine 123 (nucleophile) is an active-site residue. Residue asparagine 195 is glycosylated (N-linked (GlcNAc...) asparagine). Zn(2+) contacts are provided by aspartate 243, histidine 247, aspartate 286, and histidine 287. N-linked (GlcNAc...) asparagine glycosylation is found at asparagine 293 and asparagine 320. Residue histidine 383 coordinates Zn(2+). Asparagine 406, asparagine 434, and asparagine 536 each carry an N-linked (GlcNAc...) asparagine glycan. Ca(2+)-binding residues include aspartate 635, asparagine 637, aspartate 639, isoleucine 641, and aspartate 643. Residue asparagine 737 is glycosylated (N-linked (GlcNAc...) asparagine).

It belongs to the nucleotide pyrophosphatase/phosphodiesterase family. The cofactor is Zn(2+). Requires Ca(2+) as cofactor.

It localises to the membrane. Probable phosphodiesterase. The chain is Ectonucleotide pyrophosphatase/phosphodiesterase C27A7.3 from Caenorhabditis elegans.